A 172-amino-acid polypeptide reads, in one-letter code: Protein-export protein SecB (172 aa).

This sequence belongs to the SecB family. As to quaternary structure, homotetramer, a dimer of dimers. One homotetramer interacts with 1 SecA dimer.

The protein resides in the cytoplasm. Functionally, one of the proteins required for the normal export of preproteins out of the cell cytoplasm. It is a molecular chaperone that binds to a subset of precursor proteins, maintaining them in a translocation-competent state. It also specifically binds to its receptor SecA. The protein is Protein-export protein SecB of Bordetella avium (strain 197N).